A 373-amino-acid chain; its full sequence is 3 beta-hydroxysteroid dehydrogenase/Delta 5--&gt;4-isomerase type 6 (373 aa).

The Proton acceptor role is filled by Y155. K159 contacts NAD(+). Residues 288-308 traverse the membrane as a helical segment; sequence VPLLYWLAFMLETVSFLLSPI.

It belongs to the 3-beta-HSD family. In terms of tissue distribution, expressed in skin and testis.

It is found in the endoplasmic reticulum membrane. The protein localises to the mitochondrion membrane. The enzyme catalyses a 3beta-hydroxy-Delta(5)-steroid + NAD(+) = a 3-oxo-Delta(5)-steroid + NADH + H(+). The catalysed reaction is a 3-oxo-Delta(5)-steroid = a 3-oxo-Delta(4)-steroid. It functions in the pathway lipid metabolism; steroid biosynthesis. 3-beta-HSD is a bifunctional enzyme, that catalyzes the oxidative conversion of Delta(5)-ene-3-beta-hydroxy steroid, and the oxidative conversion of ketosteroids. The 3-beta-HSD enzymatic system plays a crucial role in the biosynthesis of all classes of hormonal steroids. May be involved in local production of progesterone. This is 3 beta-hydroxysteroid dehydrogenase/Delta 5--&gt;4-isomerase type 6 (Hsd3b6) from Mus musculus (Mouse).